Reading from the N-terminus, the 232-residue chain is Large ribosomal subunit protein uL1 (232 aa).

The protein belongs to the universal ribosomal protein uL1 family. As to quaternary structure, part of the 50S ribosomal subunit.

Functionally, binds directly to 23S rRNA. The L1 stalk is quite mobile in the ribosome, and is involved in E site tRNA release. Protein L1 is also a translational repressor protein, it controls the translation of the L11 operon by binding to its mRNA. The polypeptide is Large ribosomal subunit protein uL1 (Chlamydia abortus (strain DSM 27085 / S26/3) (Chlamydophila abortus)).